A 201-amino-acid polypeptide reads, in one-letter code: Ubiquitin-conjugating enzyme E2 E2 (201 aa).

Over residues 1–10 (MSTEAQRVDD) the composition is skewed to basic and acidic residues. The disordered stretch occupies residues 1–55 (MSTEAQRVDDSPSTSGGSSDGDQRESVQQEPEREQVQPKKKEGKISSKTAAKLST). Ser-2 is subject to N-acetylserine. Phosphoserine occurs at positions 11, 15, 18, and 19. Over residues 21-45 (GDQRESVQQEPEREQVQPKKKEGKI) the composition is skewed to basic and acidic residues. A compositionally biased stretch (low complexity) spans 46–55 (SSKTAAKLST). A UBC core domain is found at 55-201 (TSAKRIQKEL…ARQWTKRYAT (147 aa)). The Glycyl thioester intermediate role is filled by Cys-139.

It belongs to the ubiquitin-conjugating enzyme family. Post-translationally, autoubiquitinated in vitro.

It catalyses the reaction S-ubiquitinyl-[E1 ubiquitin-activating enzyme]-L-cysteine + [E2 ubiquitin-conjugating enzyme]-L-cysteine = [E1 ubiquitin-activating enzyme]-L-cysteine + S-ubiquitinyl-[E2 ubiquitin-conjugating enzyme]-L-cysteine.. Its pathway is protein modification; protein ubiquitination. Functionally, accepts ubiquitin from the E1 complex and catalyzes its covalent attachment to other proteins. In vitro catalyzes 'Lys-11'- and 'Lys-48'-, as well as 'Lys-63'-linked polyubiquitination. Catalyzes the ISGylation of influenza A virus NS1 protein. The protein is Ubiquitin-conjugating enzyme E2 E2 of Homo sapiens (Human).